Here is a 264-residue protein sequence, read N- to C-terminus: Thymidylate synthase (264 aa).

R21 is a binding site for dUMP. H51 contacts (6R)-5,10-methylene-5,6,7,8-tetrahydrofolate. A dUMP-binding site is contributed by 126–127 (RR). C146 (nucleophile) is an active-site residue. Residues 166–169 (RSVD), N177, and 207–209 (HLY) each bind dUMP. D169 provides a ligand contact to (6R)-5,10-methylene-5,6,7,8-tetrahydrofolate. Residue A263 participates in (6R)-5,10-methylene-5,6,7,8-tetrahydrofolate binding.

It belongs to the thymidylate synthase family. Bacterial-type ThyA subfamily. As to quaternary structure, homodimer.

The protein resides in the cytoplasm. The catalysed reaction is dUMP + (6R)-5,10-methylene-5,6,7,8-tetrahydrofolate = 7,8-dihydrofolate + dTMP. Its pathway is pyrimidine metabolism; dTTP biosynthesis. In terms of biological role, catalyzes the reductive methylation of 2'-deoxyuridine-5'-monophosphate (dUMP) to 2'-deoxythymidine-5'-monophosphate (dTMP) while utilizing 5,10-methylenetetrahydrofolate (mTHF) as the methyl donor and reductant in the reaction, yielding dihydrofolate (DHF) as a by-product. This enzymatic reaction provides an intracellular de novo source of dTMP, an essential precursor for DNA biosynthesis. The chain is Thymidylate synthase from Geobacillus kaustophilus (strain HTA426).